The sequence spans 216 residues: MTRNDLLDRLATTQASALETQGLGLVPMVVEQSGRGERAYDIYSRLLKERVVFLVGEVNDQTANLVVAQLLFLESENPDKDISLYINSPGGSVSAGLAIYDTMQFVKPDVQTLCMGMAASMGAFLLAAGAKGKRSALPNSRIMIHQPLGGARGQASDIEIQAREILYLRERLNSILSEVTGQPVEKIARDTDRDNFMSGDQAVDYGLIDKVIARRS.

The Nucleophile role is filled by S120. The active site involves H145.

The protein belongs to the peptidase S14 family. As to quaternary structure, fourteen ClpP subunits assemble into 2 heptameric rings which stack back to back to give a disk-like structure with a central cavity, resembling the structure of eukaryotic proteasomes.

The protein resides in the cytoplasm. The enzyme catalyses Hydrolysis of proteins to small peptides in the presence of ATP and magnesium. alpha-casein is the usual test substrate. In the absence of ATP, only oligopeptides shorter than five residues are hydrolyzed (such as succinyl-Leu-Tyr-|-NHMec, and Leu-Tyr-Leu-|-Tyr-Trp, in which cleavage of the -Tyr-|-Leu- and -Tyr-|-Trp bonds also occurs).. In terms of biological role, cleaves peptides in various proteins in a process that requires ATP hydrolysis. Has a chymotrypsin-like activity. Plays a major role in the degradation of misfolded proteins. This chain is ATP-dependent Clp protease proteolytic subunit, found in Cupriavidus pinatubonensis (strain JMP 134 / LMG 1197) (Cupriavidus necator (strain JMP 134)).